Consider the following 468-residue polypeptide: RUS family member 1 (468 aa).

At Ala2 the chain carries N-acetylalanine. Phosphothreonine is present on Thr49. Residues Leu247 to Leu267 traverse the membrane as a helical segment.

The protein belongs to the RUS1 family.

It localises to the membrane. The protein is RUS family member 1 of Homo sapiens (Human).